The chain runs to 529 residues: Cytochrome P450 monooxygenase patI (529 aa).

Residues 1-8 (MDFTQVPP) lie on the Cytoplasmic side of the membrane. Residues 9–25 (SYILGVLLSSTSILFCL) traverse the membrane as a helical segment. Residues 26-529 (KYLLRSGYRP…EAQGVFSRFD (504 aa)) are Lumenal-facing. 2 N-linked (GlcNAc...) asparagine glycosylation sites follow: N81 and N383. C449 contacts heme.

This sequence belongs to the cytochrome P450 family. Heme is required as a cofactor.

The protein localises to the endoplasmic reticulum membrane. It catalyses the reaction 3-hydroxybenzyl alcohol + reduced [NADPH--hemoprotein reductase] + O2 = gentisyl alcohol + oxidized [NADPH--hemoprotein reductase] + H2O + H(+). It functions in the pathway mycotoxin biosynthesis; patulin biosynthesis. Functionally, cytochrome P450 monooxygenase; part of the gene cluster that mediates the biosynthesis of patulin, an acetate-derived tetraketide mycotoxin produced by several fungal species that shows antimicrobial properties against several bacteria. PatI catalyzes the conversion of m-hydroxybenzyl alcohol into gentisyl alcohol. The pathway begins with the synthesis of 6-methylsalicylic acid by the polyketide synthase (PKS) patK via condensation of acetate and malonate units. The 6-methylsalicylic acid decarboxylase patG then catalyzes the decarboxylation of 6-methylsalicylic acid to yield m-cresol (also known as 3-methylphenol). These first reactions occur in the cytosol. The intermediate m-cresol is then transported into the endoplasmic reticulum where the cytochrome P450 monooxygenase patH converts it to m-hydroxybenzyl alcohol, which is further converted to gentisyl alcohol by the cytochrome P450 monooxygenase patI. The oxidoreductases patJ and patO further convert gentisyl alcohol to isoepoxydon in the vacuole. PatN catalyzes then the transformation of isoepoxydon into phyllostine. The cluster protein patF is responsible for the conversion from phyllostine to neopatulin whereas the alcohol dehydrogenase patD converts neopatulin to E-ascladiol. The steps between isoepoxydon and E-ascladiol occur in the cytosol, and E-ascladiol is probably secreted to the extracellular space by one of the cluster-specific transporters patC or patM. Finally, the secreted patulin synthase patE catalyzes the conversion of E-ascladiol to patulin. This is Cytochrome P450 monooxygenase patI from Aspergillus clavatus (strain ATCC 1007 / CBS 513.65 / DSM 816 / NCTC 3887 / NRRL 1 / QM 1276 / 107).